A 203-amino-acid chain; its full sequence is Outer-membrane lipoprotein LolB (203 aa).

An N-terminal signal peptide occupies residues 1–16; it reads MKTFLPCLFFLLILVG. Residue C17 is the site of N-palmitoyl cysteine attachment. C17 is lipidated: S-diacylglycerol cysteine.

It belongs to the LolB family. Monomer.

It is found in the cell outer membrane. In terms of biological role, plays a critical role in the incorporation of lipoproteins in the outer membrane after they are released by the LolA protein. The polypeptide is Outer-membrane lipoprotein LolB (Psychromonas ingrahamii (strain DSM 17664 / CCUG 51855 / 37)).